Here is a 288-residue protein sequence, read N- to C-terminus: Polyamine aminopropyltransferase (288 aa).

One can recognise a PABS domain in the interval 9–238 (ETLHDQFGQY…GIMTFAWATD (230 aa)). Residue Gln33 participates in S-methyl-5'-thioadenosine binding. 2 residues coordinate spermidine: His64 and Asp88. Residues Glu108 and 140–141 (DG) each bind S-methyl-5'-thioadenosine. The active-site Proton acceptor is Asp158. Residue 158-161 (DCTD) coordinates spermidine. Pro165 is a binding site for S-methyl-5'-thioadenosine.

It belongs to the spermidine/spermine synthase family. In terms of assembly, homodimer or homotetramer.

Its subcellular location is the cytoplasm. It catalyses the reaction S-adenosyl 3-(methylsulfanyl)propylamine + putrescine = S-methyl-5'-thioadenosine + spermidine + H(+). It functions in the pathway amine and polyamine biosynthesis; spermidine biosynthesis; spermidine from putrescine: step 1/1. Functionally, catalyzes the irreversible transfer of a propylamine group from the amino donor S-adenosylmethioninamine (decarboxy-AdoMet) to putrescine (1,4-diaminobutane) to yield spermidine. This is Polyamine aminopropyltransferase from Shigella dysenteriae serotype 1 (strain Sd197).